The chain runs to 261 residues: Triosephosphate isomerase (261 aa).

10–12 (NWK) is a binding site for substrate. The Electrophile role is filled by His-100. The active-site Proton acceptor is the Glu-172. Residues Gly-178, Ser-218, and 239 to 240 (GG) each bind substrate.

It belongs to the triosephosphate isomerase family. Homodimer.

The protein resides in the cytoplasm. The catalysed reaction is D-glyceraldehyde 3-phosphate = dihydroxyacetone phosphate. Its pathway is carbohydrate biosynthesis; gluconeogenesis. The protein operates within carbohydrate degradation; glycolysis; D-glyceraldehyde 3-phosphate from glycerone phosphate: step 1/1. In terms of biological role, involved in the gluconeogenesis. Catalyzes stereospecifically the conversion of dihydroxyacetone phosphate (DHAP) to D-glyceraldehyde-3-phosphate (G3P). This chain is Triosephosphate isomerase, found in Mycolicibacterium paratuberculosis (strain ATCC BAA-968 / K-10) (Mycobacterium paratuberculosis).